The sequence spans 377 residues: Chaperone protein DnaJ (377 aa).

The region spanning 4–69 (DYYEALGVTR…QKRAAYDRFG (66 aa)) is the J domain. The CR-type zinc-finger motif lies at 135 to 213 (GKTAQIRVPT…CHGQGRVTQE (79 aa)). Residues C148, C151, C165, C168, C187, C190, C201, and C204 each contribute to the Zn(2+) site. CXXCXGXG motif repeat units follow at residues 148–155 (CDECSGSG), 165–172 (CTMCSGSG), 187–194 (CPGCNGRG), and 201–208 (CEKCHGQG).

The protein belongs to the DnaJ family. Homodimer. Zn(2+) serves as cofactor.

It localises to the cytoplasm. In terms of biological role, participates actively in the response to hyperosmotic and heat shock by preventing the aggregation of stress-denatured proteins and by disaggregating proteins, also in an autonomous, DnaK-independent fashion. Unfolded proteins bind initially to DnaJ; upon interaction with the DnaJ-bound protein, DnaK hydrolyzes its bound ATP, resulting in the formation of a stable complex. GrpE releases ADP from DnaK; ATP binding to DnaK triggers the release of the substrate protein, thus completing the reaction cycle. Several rounds of ATP-dependent interactions between DnaJ, DnaK and GrpE are required for fully efficient folding. Also involved, together with DnaK and GrpE, in the DNA replication of plasmids through activation of initiation proteins. The polypeptide is Chaperone protein DnaJ (Brucella ovis (strain ATCC 25840 / 63/290 / NCTC 10512)).